The following is a 291-amino-acid chain: MTTLAIDIGGTKLAAALIGADGQIRDRRELPTPASQTPQALRDALSALVSPLQAHAQRVAIASTGIIRDGSLLALNPHNLGGLLHFPLVKTLEQLTNLPTIAINDAQAAAWAEYQALDGDITDMVFITVSTGVGGGVVSGGKLRTGPGGLAGHIGHTLADPHGPVCGCGRTGCVEAIASGRGIATAAQGELAGANAKTIFTRAGQGDEQAQQLIHRSARTLARLIADIKATTDCQCVVVGGSVGLAEGYLALVETYLAQEPAAFHVDLLAAHYRHDAGLLGAALLAQGEKL.

ATP-binding positions include 5–12 (AIDIGGTK) and 132–139 (GVGGGVVS). Histidine 156, cysteine 166, cysteine 168, and cysteine 173 together coordinate Zn(2+).

This sequence belongs to the ROK (NagC/XylR) family. NanK subfamily. Homodimer.

It carries out the reaction an N-acyl-D-mannosamine + ATP = an N-acyl-D-mannosamine 6-phosphate + ADP + H(+). It participates in amino-sugar metabolism; N-acetylneuraminate degradation; D-fructose 6-phosphate from N-acetylneuraminate: step 2/5. In terms of biological role, catalyzes the phosphorylation of N-acetylmannosamine (ManNAc) to ManNAc-6-P. In Escherichia coli O6:K15:H31 (strain 536 / UPEC), this protein is N-acetylmannosamine kinase.